A 96-amino-acid polypeptide reads, in one-letter code: Large ribosomal subunit protein uL23 (96 aa).

This sequence belongs to the universal ribosomal protein uL23 family. In terms of assembly, part of the 50S ribosomal subunit. Contacts protein L29, and trigger factor when it is bound to the ribosome.

One of the early assembly proteins it binds 23S rRNA. One of the proteins that surrounds the polypeptide exit tunnel on the outside of the ribosome. Forms the main docking site for trigger factor binding to the ribosome. This chain is Large ribosomal subunit protein uL23, found in Vesicomyosocius okutanii subsp. Calyptogena okutanii (strain HA).